A 149-amino-acid chain; its full sequence is Ribonuclease pancreatic (149 aa).

The first 25 residues, 1 to 25, serve as a signal peptide directing secretion; it reads MGLEKSFILFPLLILVLGWVQSSLG. Positions 32 and 35 each coordinate substrate. The Proton acceptor role is filled by H37. 4 cysteine pairs are disulfide-bonded: C51–C109, C65–C120, C83–C135, and C90–C97. N59 is a glycosylation site (N-linked (GlcNAc...) asparagine). 66 to 70 contacts substrate; it reads KPVNT. N87 is a glycosylation site (N-linked (GlcNAc...) asparagine). Positions 91 and 110 each coordinate substrate. The Proton donor role is filled by H144.

Belongs to the pancreatic ribonuclease family. Monomer. Interacts with and forms tight 1:1 complexes with RNH1. Dimerization of two such complexes may occur. Interaction with RNH1 inhibits this protein. In terms of tissue distribution, pancreas.

Its subcellular location is the secreted. The catalysed reaction is an [RNA] containing cytidine + H2O = an [RNA]-3'-cytidine-3'-phosphate + a 5'-hydroxy-ribonucleotide-3'-[RNA].. It carries out the reaction an [RNA] containing uridine + H2O = an [RNA]-3'-uridine-3'-phosphate + a 5'-hydroxy-ribonucleotide-3'-[RNA].. In terms of biological role, endonuclease that catalyzes the cleavage of RNA on the 3' side of pyrimidine nucleotides. Acts on single-stranded and double-stranded RNA. The protein is Ribonuclease pancreatic (RNASE1) of Abrothrix jelskii (Jelski's altiplano mouse).